Here is a 202-residue protein sequence, read N- to C-terminus: Imidazoleglycerol-phosphate dehydratase (202 aa).

Belongs to the imidazoleglycerol-phosphate dehydratase family.

It is found in the cytoplasm. The catalysed reaction is D-erythro-1-(imidazol-4-yl)glycerol 3-phosphate = 3-(imidazol-4-yl)-2-oxopropyl phosphate + H2O. Its pathway is amino-acid biosynthesis; L-histidine biosynthesis; L-histidine from 5-phospho-alpha-D-ribose 1-diphosphate: step 6/9. The protein is Imidazoleglycerol-phosphate dehydratase of Rhodopirellula baltica (strain DSM 10527 / NCIMB 13988 / SH1).